Here is a 244-residue protein sequence, read N- to C-terminus: EEF1A lysine methyltransferase 2 (244 aa).

The segment at 1-27 (MNADAEGHSGAVVPAQSPEGSSAADDF) is disordered. The residue at position 21 (serine 21) is a Phosphoserine.

Belongs to the class I-like SAM-binding methyltransferase superfamily. EFM4 family.

The protein resides in the cytoplasm. The protein localises to the nucleus. The catalysed reaction is L-lysyl-[protein] + 3 S-adenosyl-L-methionine = N(6),N(6),N(6)-trimethyl-L-lysyl-[protein] + 3 S-adenosyl-L-homocysteine + 3 H(+). In terms of biological role, protein-lysine methyltransferase that selectively catalyzes the trimethylation of EEF1A at 'Lys-318'. The polypeptide is EEF1A lysine methyltransferase 2 (Mus musculus (Mouse)).